A 137-amino-acid polypeptide reads, in one-letter code: Holo-[acyl-carrier-protein] synthase (137 aa).

Residues Asp-8 and Glu-58 each contribute to the Mg(2+) site.

It belongs to the P-Pant transferase superfamily. AcpS family. Mg(2+) serves as cofactor.

The protein localises to the cytoplasm. The enzyme catalyses apo-[ACP] + CoA = holo-[ACP] + adenosine 3',5'-bisphosphate + H(+). Functionally, transfers the 4'-phosphopantetheine moiety from coenzyme A to a Ser of acyl-carrier-protein. The chain is Holo-[acyl-carrier-protein] synthase from Lactobacillus delbrueckii subsp. bulgaricus (strain ATCC BAA-365 / Lb-18).